The following is a 277-amino-acid chain: Probable endonuclease 4 (277 aa).

Positions 67, 107, 142, 176, 179, 211, 224, 226, and 256 each coordinate Zn(2+).

This sequence belongs to the AP endonuclease 2 family. Requires Zn(2+) as cofactor.

It carries out the reaction Endonucleolytic cleavage to 5'-phosphooligonucleotide end-products.. Endonuclease IV plays a role in DNA repair. It cleaves phosphodiester bonds at apurinic or apyrimidinic (AP) sites, generating a 3'-hydroxyl group and a 5'-terminal sugar phosphate. This Akkermansia muciniphila (strain ATCC BAA-835 / DSM 22959 / JCM 33894 / BCRC 81048 / CCUG 64013 / CIP 107961 / Muc) protein is Probable endonuclease 4.